The following is a 409-amino-acid chain: Gamma-glutamyl phosphate reductase (409 aa).

The protein belongs to the gamma-glutamyl phosphate reductase family.

It localises to the cytoplasm. It catalyses the reaction L-glutamate 5-semialdehyde + phosphate + NADP(+) = L-glutamyl 5-phosphate + NADPH + H(+). It functions in the pathway amino-acid biosynthesis; L-proline biosynthesis; L-glutamate 5-semialdehyde from L-glutamate: step 2/2. Functionally, catalyzes the NADPH-dependent reduction of L-glutamate 5-phosphate into L-glutamate 5-semialdehyde and phosphate. The product spontaneously undergoes cyclization to form 1-pyrroline-5-carboxylate. This is Gamma-glutamyl phosphate reductase from Mycobacterium leprae (strain TN).